Reading from the N-terminus, the 333-residue chain is Autoinducer 2 import system permease protein LsrC (333 aa).

A run of 9 helical transmembrane segments spans residues 14–34 (LIAI…YFSL), 39–59 (LVFS…LVML), 70–90 (IAGL…SLSV), 93–113 (LLTL…VTWL), 115–135 (IPAI…MLLL), 157–177 (LNIS…AWIL), 206–226 (IQII…IVFA), 252–272 (GISL…AFFL), and 284–304 (LPAW…LIFD).

It belongs to the binding-protein-dependent transport system permease family. AraH/RbsC subfamily. The complex is composed of two ATP-binding proteins (LsrA), two transmembrane proteins (LsrC and LsrD) and a solute-binding protein (LsrB).

Its subcellular location is the cell inner membrane. In terms of biological role, part of the ABC transporter complex LsrABCD involved in autoinducer 2 (AI-2) import. Probably responsible for the translocation of the substrate across the membrane. The protein is Autoinducer 2 import system permease protein LsrC (lsrC) of Photorhabdus laumondii subsp. laumondii (strain DSM 15139 / CIP 105565 / TT01) (Photorhabdus luminescens subsp. laumondii).